A 324-amino-acid chain; its full sequence is 4-hydroxy-3-methylbut-2-enyl diphosphate reductase (324 aa).

Residue Cys-13 coordinates [4Fe-4S] cluster. (2E)-4-hydroxy-3-methylbut-2-enyl diphosphate is bound by residues His-41 and His-75. 2 residues coordinate dimethylallyl diphosphate: His-41 and His-75. 2 residues coordinate isopentenyl diphosphate: His-41 and His-75. Residue Cys-97 participates in [4Fe-4S] cluster binding. His-125 is a binding site for (2E)-4-hydroxy-3-methylbut-2-enyl diphosphate. His-125 contacts dimethylallyl diphosphate. His-125 lines the isopentenyl diphosphate pocket. Glu-127 (proton donor) is an active-site residue. Residue Thr-168 coordinates (2E)-4-hydroxy-3-methylbut-2-enyl diphosphate. Cys-225 serves as a coordination point for [4Fe-4S] cluster. Positions 253, 254, 255, and 302 each coordinate (2E)-4-hydroxy-3-methylbut-2-enyl diphosphate. The dimethylallyl diphosphate site is built by Ser-253, Ser-254, Asn-255, and Ser-302. Isopentenyl diphosphate contacts are provided by Ser-253, Ser-254, Asn-255, and Ser-302.

Belongs to the IspH family. The cofactor is [4Fe-4S] cluster.

It carries out the reaction isopentenyl diphosphate + 2 oxidized [2Fe-2S]-[ferredoxin] + H2O = (2E)-4-hydroxy-3-methylbut-2-enyl diphosphate + 2 reduced [2Fe-2S]-[ferredoxin] + 2 H(+). It catalyses the reaction dimethylallyl diphosphate + 2 oxidized [2Fe-2S]-[ferredoxin] + H2O = (2E)-4-hydroxy-3-methylbut-2-enyl diphosphate + 2 reduced [2Fe-2S]-[ferredoxin] + 2 H(+). Its pathway is isoprenoid biosynthesis; dimethylallyl diphosphate biosynthesis; dimethylallyl diphosphate from (2E)-4-hydroxy-3-methylbutenyl diphosphate: step 1/1. The protein operates within isoprenoid biosynthesis; isopentenyl diphosphate biosynthesis via DXP pathway; isopentenyl diphosphate from 1-deoxy-D-xylulose 5-phosphate: step 6/6. Functionally, catalyzes the conversion of 1-hydroxy-2-methyl-2-(E)-butenyl 4-diphosphate (HMBPP) into a mixture of isopentenyl diphosphate (IPP) and dimethylallyl diphosphate (DMAPP). Acts in the terminal step of the DOXP/MEP pathway for isoprenoid precursor biosynthesis. This chain is 4-hydroxy-3-methylbut-2-enyl diphosphate reductase, found in Chlorobium limicola (strain DSM 245 / NBRC 103803 / 6330).